The following is a 96-amino-acid chain: MKVIINGKEFDIPKGVRFGELSHEIEKAGIEFGCTDGQCGVCVARVIKGMECLNEPSEEEEETLWRVGAVDEDQRLTCQLVIEKEDCDEIVIESED.

The 95-residue stretch at 1 to 95 (MKVIINGKEF…DCDEIVIESE (95 aa)) folds into the 2Fe-2S ferredoxin-type domain. [2Fe-2S] cluster contacts are provided by cysteine 34, cysteine 39, cysteine 42, and cysteine 78. The cysteines at positions 52 and 87 are disulfide-linked.

This sequence belongs to the 2Fe2S plant-type ferredoxin family. It depends on [2Fe-2S] cluster as a cofactor.

Its function is as follows. Ferredoxins are iron-sulfur proteins that transfer electrons in a wide variety of metabolic reactions. This chain is Ferredoxin-1 (fdx1), found in Aquifex aeolicus (strain VF5).